The following is a 73-amino-acid chain: Translation initiation factor IF-1 (73 aa).

Positions 1-73 (MAKKEDTIVL…TKARVVYRHR (73 aa)) constitute an S1-like domain.

This sequence belongs to the IF-1 family. As to quaternary structure, component of the 30S ribosomal translation pre-initiation complex which assembles on the 30S ribosome in the order IF-2 and IF-3, IF-1 and N-formylmethionyl-tRNA(fMet); mRNA recruitment can occur at any time during PIC assembly.

Its subcellular location is the cytoplasm. One of the essential components for the initiation of protein synthesis. Stabilizes the binding of IF-2 and IF-3 on the 30S subunit to which N-formylmethionyl-tRNA(fMet) subsequently binds. Helps modulate mRNA selection, yielding the 30S pre-initiation complex (PIC). Upon addition of the 50S ribosomal subunit IF-1, IF-2 and IF-3 are released leaving the mature 70S translation initiation complex. This chain is Translation initiation factor IF-1, found in Chlamydia caviae (strain ATCC VR-813 / DSM 19441 / 03DC25 / GPIC) (Chlamydophila caviae).